Here is a 322-residue protein sequence, read N- to C-terminus: tRNA uridine(34) hydroxylase (322 aa).

The Rhodanese domain maps to 125–219 (QQEDTIVVDA…YGKDPEVQGE (95 aa)). Residue Cys179 is the Cysteine persulfide intermediate of the active site.

Belongs to the TrhO family.

It carries out the reaction uridine(34) in tRNA + AH2 + O2 = 5-hydroxyuridine(34) in tRNA + A + H2O. In terms of biological role, catalyzes oxygen-dependent 5-hydroxyuridine (ho5U) modification at position 34 in tRNAs. This Bacillus licheniformis (strain ATCC 14580 / DSM 13 / JCM 2505 / CCUG 7422 / NBRC 12200 / NCIMB 9375 / NCTC 10341 / NRRL NRS-1264 / Gibson 46) protein is tRNA uridine(34) hydroxylase.